The following is a 298-amino-acid chain: Putative insertion sequence ATP-binding protein y4iQ/y4nD/y4sD (298 aa).

ATP is bound at residue 114-121 (GPPGGGKS). The disordered stretch occupies residues 276-298 (RQSEHDETLASDNQHDTFMPTAT).

The protein belongs to the IS21/IS1162 putative ATP-binding protein family.

The chain is Putative insertion sequence ATP-binding protein y4iQ/y4nD/y4sD from Sinorhizobium fredii (strain NBRC 101917 / NGR234).